Consider the following 1320-residue polypeptide: Transcriptional activator MN1 (1320 aa).

Met-1 is subject to N-acetylmethionine. 9 disordered regions span residues 1-26, 92-121, 147-219, 231-411, 423-442, 474-615, 629-819, 840-1150, and 1247-1273; these read MFGL…FNET, FGGQ…FGGP, PPFA…SLEP, LEYN…EYPI, SEPV…NQRL, NGSM…AGRL, SAWF…KDNL, GAPN…PDEI, and PWEK…SASQ. Positions 98–113 are enriched in basic residues; that stretch reads HHGHPGSHHPHQHHPH. Low complexity-rich tracts occupy residues 202-214 and 291-309; these read SFHG…GSDS and QPPQ…QQQQ. Residues 338–366 show a composition bias toward pro residues; sequence MQPPQQAPPPPQQQPPQQPPQQQPPPPPG. Over residues 498-514 the composition is skewed to pro residues; sequence FTPPVPDSFPSGPPLQH. Composition is skewed to low complexity over residues 523–550 and 564–578; these read QQQQ…QQQQ and RNQQ…LAQL. Composition is skewed to gly residues over residues 582 to 596 and 701 to 710; these read GDVG…GPVG and QFGGSLGGLG. The span at 759-768 shows a compositional bias: low complexity; sequence SGPGVNSPPS. Residues 769 to 784 are compositionally biased toward gly residues; it reads AGGGGGSSGGGGGGGA. 2 stretches are compositionally biased toward low complexity: residues 798–809 and 895–905; these read SASKLGALSLGS and GTSSSGSKASG. Over residues 914 to 930 the composition is skewed to polar residues; sequence DGTSLSPNYTLESTSGN. Phosphoserine is present on residues Ser-950 and Ser-954. Over residues 973–984 the composition is skewed to low complexity; that stretch reads GVSPGQQQASGA. The residue at position 1007 (Ser-1007) is a Phosphoserine. A compositionally biased stretch (polar residues) spans 1048-1066; that stretch reads EVSTSYANEDEVSSSSDNP. A Phosphoserine modification is found at Ser-1081. Over residues 1118–1128 the composition is skewed to gly residues; sequence YGGGGGPGHPG.

In terms of assembly, interacts with PBX1, PKNOX1, ZBTB24, E2F7, RING1. In terms of tissue distribution, widely expressed in fetal and adult tissues. Highest expression is observed in fetal brain and skeletal muscle, and adult skeletal muscle.

The protein localises to the nucleus. Transcriptional activator which specifically regulates expression of TBX22 in the posterior region of the developing palate. Required during later stages of palate development for growth and medial fusion of the palatal shelves. Promotes maturation and normal function of calvarial osteoblasts, including expression of the osteoclastogenic cytokine TNFSF11/RANKL. Necessary for normal development of the membranous bones of the skull. May play a role in tumor suppression. The sequence is that of Transcriptional activator MN1 (MN1) from Homo sapiens (Human).